The sequence spans 604 residues: Beta-(1--&gt;2)glucan export ATP-binding/permease protein NdvA (604 aa).

The ABC transmembrane type-1 domain occupies 21 to 311 (GWILAFANLL…VVSFINSVFM (291 aa)). 6 helical membrane-spanning segments follow: residues 22–42 (WILA…PVLF), 68–88 (LLGA…AVAL), 146–166 (EHFA…YINW), 168–188 (LAIL…LVVH), 238–258 (LLAL…ITRA), and 285–305 (IVMF…VVSF). The region spanning 345–579 (VEFKDVSFSY…QGHFAALARA (235 aa)) is the ABC transporter domain. 378–385 (GATGAGKS) lines the ATP pocket.

This sequence belongs to the ABC transporter superfamily. Beta-(1--&gt;2)glucan exporter (TC 3.A.1.108.1) family. As to quaternary structure, homodimer.

The protein resides in the cell inner membrane. It catalyses the reaction [(1-&gt;2)-beta-D-glucosyl](n)(in) + ATP + H2O = [(1-&gt;2)-beta-D-glucosyl](n)(out) + ADP + phosphate + H(+). Involved in beta-(1--&gt;2)glucan export. Transmembrane domains (TMD) form a pore in the inner membrane and the ATP-binding domain (NBD) is responsible for energy generation. This is Beta-(1--&gt;2)glucan export ATP-binding/permease protein NdvA from Rhodopseudomonas palustris (strain BisB18).